The following is a 163-amino-acid chain: MEVGAKVPKKAGAGGRRGGGGPKKKPVSRSVKAGLQFPVGRIGRYLKQGRYSQRIGTGAPVYLAAVLEYLAAEVLELAGNAARDNKKNRIIPRHVLLAIRNDEELGKLLAGVTIAHGGVLPNINPVLLPKKTGSAAAKEAKEGKTPKSPKKATTKSPKKAAAA.

2 disordered regions span residues 1–30 and 134–163; these read MEVG…VSRS and SAAA…AAAA. Gly residues predominate over residues 12-21; it reads GAGGRRGGGG. The span at 147-163 shows a compositional bias: basic residues; that stretch reads KSPKKATTKSPKKAAAA. 2 consecutive short sequence motifs (SPKK motif) follow at residues 148–151 and 156–159; these read SPKK.

Belongs to the histone H2A family. As to quaternary structure, the nucleosome is a histone octamer containing two molecules each of H2A, H2B, H3 and H4 assembled in one H3-H4 heterotetramer and two H2A-H2B heterodimers. The octamer wraps approximately 147 bp of DNA.

It localises to the nucleus. The protein resides in the chromosome. Its function is as follows. Core component of nucleosome. Nucleosomes wrap and compact DNA into chromatin, limiting DNA accessibility to the cellular machineries which require DNA as a template. Histones thereby play a central role in transcription regulation, DNA repair, DNA replication and chromosomal stability. DNA accessibility is regulated via a complex set of post-translational modifications of histones, also called histone code, and nucleosome remodeling. This Oryza sativa subsp. indica (Rice) protein is Probable histone H2A.4.